We begin with the raw amino-acid sequence, 201 residues long: Recombination protein RecR (201 aa).

A C4-type zinc finger spans residues 59-74 (CEICGNMDTENICRIC). The 96-residue stretch at 82-177 (SIIAIVETVA…KISRLASGIP (96 aa)) folds into the Toprim domain.

This sequence belongs to the RecR family.

In terms of biological role, may play a role in DNA repair. It seems to be involved in an RecBC-independent recombinational process of DNA repair. It may act with RecF and RecO. This is Recombination protein RecR from Rickettsia peacockii (strain Rustic).